We begin with the raw amino-acid sequence, 170 residues long: Peptide deformylase (170 aa).

C91 and H133 together coordinate Fe cation. The active site involves E134. H137 serves as a coordination point for Fe cation.

Belongs to the polypeptide deformylase family. The cofactor is Fe(2+).

The catalysed reaction is N-terminal N-formyl-L-methionyl-[peptide] + H2O = N-terminal L-methionyl-[peptide] + formate. Its function is as follows. Removes the formyl group from the N-terminal Met of newly synthesized proteins. Requires at least a dipeptide for an efficient rate of reaction. N-terminal L-methionine is a prerequisite for activity but the enzyme has broad specificity at other positions. The protein is Peptide deformylase of Aeromonas salmonicida (strain A449).